A 383-amino-acid chain; its full sequence is S-adenosylmethionine synthase (383 aa).

H15 serves as a coordination point for ATP. D17 is a Mg(2+) binding site. Residue E43 participates in K(+) binding. Residues E56 and Q99 each contribute to the L-methionine site. The segment at 99-109 is flexible loop; sequence QSPDINQGVDK. ATP contacts are provided by residues 164-166, 230-231, D239, 245-246, A262, and K266; these read DAK, RF, and RK. D239 is an L-methionine binding site. Residue K270 participates in L-methionine binding.

The protein belongs to the AdoMet synthase family. As to quaternary structure, homotetramer; dimer of dimers. It depends on Mg(2+) as a cofactor. Requires K(+) as cofactor.

The protein resides in the cytoplasm. It catalyses the reaction L-methionine + ATP + H2O = S-adenosyl-L-methionine + phosphate + diphosphate. It participates in amino-acid biosynthesis; S-adenosyl-L-methionine biosynthesis; S-adenosyl-L-methionine from L-methionine: step 1/1. Functionally, catalyzes the formation of S-adenosylmethionine (AdoMet) from methionine and ATP. The overall synthetic reaction is composed of two sequential steps, AdoMet formation and the subsequent tripolyphosphate hydrolysis which occurs prior to release of AdoMet from the enzyme. This chain is S-adenosylmethionine synthase, found in Vibrio atlanticus (strain LGP32) (Vibrio splendidus (strain Mel32)).